The primary structure comprises 173 residues: Protein tyrosine phosphatase type IVA 1 (173 aa).

The Tyrosine-protein phosphatase domain maps to 8 to 161 (APVEVTYKNM…YRPKMRLRFK (154 aa)). Cys-49 and Cys-104 form a disulfide bridge. Asp-72 (proton donor) is an active-site residue. The interval 97 to 132 (GCCIAVHCVAGLGRAPVLVALALIEGGMKYEDAVQF) is interaction with ATF5. Cys-104 (phosphocysteine intermediate) is an active-site residue. A phosphate-binding site is contributed by 105–110 (VAGLGR). Arg-110 contributes to the substrate binding site. Cys-170 is subject to Cysteine methyl ester. The S-farnesyl cysteine moiety is linked to residue Cys-170. The propeptide at 171–173 (CIQ) is removed in mature form.

It belongs to the protein-tyrosine phosphatase family. In terms of assembly, homotrimer. Interacts with ATF5. Interacts with tubulin. In terms of processing, farnesylated. Farnesylation is required for membrane targeting. Unfarnesylated forms are shifted into the nucleus. In terms of tissue distribution, expressed in bone marrow, lymph nodes, T lymphocytes, spleen, thymus and tonsil. Overexpressed in tumor cell lines.

It localises to the cell membrane. Its subcellular location is the early endosome. The protein resides in the endoplasmic reticulum. It is found in the cytoplasm. The protein localises to the cytoskeleton. It localises to the spindle. Its subcellular location is the nucleus. It carries out the reaction O-phospho-L-tyrosyl-[protein] + H2O = L-tyrosyl-[protein] + phosphate. Its activity is regulated as follows. Inhibited by sodium orthovanadate and pentamidine. In terms of biological role, protein tyrosine phosphatase which stimulates progression from G1 into S phase during mitosis. May play a role in the development and maintenance of differentiating epithelial tissues. Enhances cell proliferation, cell motility and invasive activity, and promotes cancer metastasis. The chain is Protein tyrosine phosphatase type IVA 1 (PTP4A1) from Homo sapiens (Human).